Reading from the N-terminus, the 2271-residue chain is Serine-rich adhesin for platelets (2271 aa).

An N-terminal signal peptide occupies residues 1–89 (MSKRQKAFHD…VNMLHDQQAF (89 aa)). Residues 90–230 (AASDAPLTSE…KTSTTSTSTA (141 aa)) are serine-rich repeat region 1, SRR1. Positions 100-111 (LNTQSETVGNQN) are enriched in polar residues. Residues 100–229 (LNTQSETVGN…NKTSTTSTST (130 aa)) are disordered. The segment covering 112 to 128 (STTIEASTSTADSTSVT) has biased composition (low complexity). Polar residues predominate over residues 129 to 140 (KNSSSVQTSNSD). The segment covering 150–229 (VTSTTNSTSN…NKTSTTSTST (80 aa)) has biased composition (low complexity). The segment at 231-751 (PVKLRTFSRL…TTFKYEVTRN (521 aa)) is non-repeat region (NRR). The tract at residues 245–491 (FASAATTTAV…QQVQFGTFEY (247 aa)) is L-lectin module. Residues Asp365, Tyr367, Asn369, and Asp382 each contribute to the Ca(2+) site. The segment at 492-571 (TESAVTQVRY…NAGQSVTYYF (80 aa)) is beta-grasp module. Positions 572-659 (TDVKAPTVTV…KSTTTFTINV (88 aa)) are cadherin-like module-1. Ca(2+) contacts are provided by Asp573, Lys575, Asp601, Asn602, Asp645, Asp661, Thr663, Asp690, Asn691, and Asp734. Residues 660–751 (VDTTAPTVTP…TTFKYEVTRN (92 aa)) form a cadherin-like module-2 region. 2 disordered regions span residues 751–791 (NSMS…VVST) and 806–2242 (SVSA…NGLL). 3 stretches are compositionally biased toward low complexity: residues 752–791 (SMSDSVSTSGSTQQSQSVSTSKADSQSASTSTSGSIVVST), 806–1392 (SVSA…LSLS), and 1402–2214 (SNSA…ATSE). Residues 752 to 2232 (SMSDSVSTSG…AQSEKRLPDT (1481 aa)) form a serine-rich repeat region 2, SRR2 region. Residues 2229-2233 (LPDTG) carry the LPXTG sorting signal motif. Thr2232 is subject to Pentaglycyl murein peptidoglycan amidated threonine. Residues 2233 to 2271 (GDSIKQNGLLGGVMTLLVGLGLMKRKKKKDENDQDDSQA) constitute a propeptide, removed by sortase.

It belongs to the serine-rich repeat protein (SRRP) family. In terms of processing, proteolytically cleaved by a metalloprotease. Glycosylated. It is probable that most of the Ser residues in SSR1 and SSR2 are O-GlcNAcylated. Sequential glycosylation by sugar transferases are able to generate complex sugar polymorphisms.

The protein localises to the secreted. It is found in the cell wall. Its function is as follows. Mediates binding to human platelets, possibly through a receptor-ligand interaction. Probably associated with virulence in endovascular infection. Plays a positive role in biofilm formation, possibly by self-association via the non-repeat region (NRR or binding region, BR). Binds to and plays a role in human lung epithelial cell invasion via the L-lectin module of its NRR domain; N-acetylneuraminic acid (Neu5Ac) inhibits binding. Treatment of host cells with neuraminidase decreases adherence of S.aureus cells, suggesting SraP recognizes a host terminal Neu5Ac moiety as a receptor. This Staphylococcus aureus (strain NCTC 8325 / PS 47) protein is Serine-rich adhesin for platelets.